A 339-amino-acid chain; its full sequence is UDP-glucose 4-epimerase (339 aa).

NAD(+) is bound by residues 10 to 12 (GYI), 31 to 35 (DNLSN), 58 to 59 (DL), phenylalanine 80, and lysine 84. Position 124-126 (124-126 (SAT)) interacts with substrate. Tyrosine 148 serves as the catalytic Proton acceptor. NAD(+)-binding residues include lysine 152 and tyrosine 176. Substrate contacts are provided by residues 176–178 (YFN), 197–199 (NNL), arginine 230, and 291–294 (RPGD).

This sequence belongs to the NAD(P)-dependent epimerase/dehydratase family. NAD(+) is required as a cofactor.

The enzyme catalyses UDP-alpha-D-glucose = UDP-alpha-D-galactose. It catalyses the reaction UDP-N-acetyl-alpha-D-glucosamine = UDP-N-acetyl-alpha-D-galactosamine. It functions in the pathway cell wall biogenesis; teichoic acid biosynthesis. Catalyzes two distinct but analogous reactions: the reversible epimerization of UDP-glucose to UDP-galactose and the reversible epimerization of UDP-N-acetylglucosamine to UDP-N-acetylgalactosamine. The enzyme is more efficient in catalyzing the interconversion between unacetylated than between corresponding N-acetylated substrates. Essential for growth in media containing either glucose or galactose. May protect the cell from the toxic effects of galactose and glucose or derivatives of both sugars. Involved in the biosynthesis of teichoic acids via the formation of UDP-N-acetylgalactosamine. Influences cell division. The sequence is that of UDP-glucose 4-epimerase from Bacillus subtilis (strain 168).